The primary structure comprises 544 residues: Secreted aspartic protease 9 (544 aa).

The first 17 residues, 1–17 (MRLNSVALLSLVATALA), serve as a signal peptide directing secretion. The interval 31–50 (GESKDDLSPEDDSNPRFVKR) is disordered. The 415-residue stretch at 65–479 (YMATLKIGSN…DLDDYEVSLA (415 aa)) folds into the Peptidase A1 domain. The active site involves aspartate 83. 83-85 (DTG) lines the pepstatin A pocket. Cysteine 98 and cysteine 195 are joined by a disulfide. 3 N-linked (GlcNAc...) asparagine glycosylation sites follow: asparagine 212, asparagine 240, and asparagine 252. Residue aspartate 371 is part of the active site. 371 to 375 (DTGST) contacts pepstatin A. An intrachain disulfide couples cysteine 406 to cysteine 441. N-linked (GlcNAc...) asparagine glycans are attached at residues asparagine 422 and asparagine 499. Positions 500–519 (SSGSGTTSSSGTSTSTSTRH) are disordered. The GPI-anchor amidated serine moiety is linked to residue serine 520. A propeptide spans 521-544 (AGSIISKPVYGLLLSLLISCYVLV) (removed in mature form). Residues 524–544 (IISKPVYGLLLSLLISCYVLV) traverse the membrane as a helical segment.

The protein belongs to the peptidase A1 family. Monomer. In terms of processing, the GPI-anchor is attached to the protein in the endoplasmic reticulum and serves to target the protein to the cell surface. There, the glucosamine-inositol phospholipid moiety is cleaved off and the GPI-modified mannoprotein is covalently attached via its lipidless GPI glycan remnant to the 1,6-beta-glucan of the outer cell wall layer.

It localises to the cell membrane. The protein resides in the secreted. It is found in the cell wall. The catalysed reaction is Preferential cleavage at the carboxyl of hydrophobic amino acids, but fails to cleave 15-Leu-|-Tyr-16, 16-Tyr-|-Leu-17 and 24-Phe-|-Phe-25 of insulin B chain. Activates trypsinogen, and degrades keratin.. In terms of biological role, secreted aspartic peptidases (SAPs) are a group of ten acidic hydrolases considered as key virulence factors. These enzymes supply the fungus with nutrient amino acids as well as are able to degrade the selected host's proteins involved in the immune defense. Moreover, acts toward human hemoglobin though limited proteolysis to generate a variety of antimicrobial hemocidins, enabling to compete with the other microorganisms of the same physiological niche using the microbicidal peptides generated from the host protein. Plays a key role in defense against host by cleaving histatin-5 (Hst 5), a peptide from human saliva that carries out fungicidal activity. The cleavage rate decreases in an order of SAP2 &gt; SAP9 &gt; SAP3 &gt; SAP7 &gt; SAP4 &gt; SAP1 &gt; SAP8. The first cleavage occurs between residues 'Lys-17' and 'His-18' of Hst 5, giving DSHAKRHHGYKRKFHEK and HHSHRGY peptides. Simultaneously, the DSHAKRHHGYKRK peptide is also formed. Further fragmentation by SAP9 results in FHEK product. This chain is Secreted aspartic protease 9, found in Candida albicans (strain SC5314 / ATCC MYA-2876) (Yeast).